A 351-amino-acid chain; its full sequence is Dihydroorotate dehydrogenase (quinone) (351 aa).

Residues 65–69 and threonine 89 each bind FMN; that span reads AGLDK. Lysine 69 is a substrate binding site. 114 to 118 provides a ligand contact to substrate; it reads NRLGF. 2 residues coordinate FMN: asparagine 150 and asparagine 183. Asparagine 183 provides a ligand contact to substrate. The active-site Nucleophile is serine 186. Position 188 (asparagine 188) interacts with substrate. Lysine 228 and threonine 256 together coordinate FMN. 257-258 is a substrate binding site; that stretch reads NT. Residues glycine 279, glycine 308, and 329-330 contribute to the FMN site; that span reads YT.

It belongs to the dihydroorotate dehydrogenase family. Type 2 subfamily. As to quaternary structure, monomer. The cofactor is FMN.

The protein resides in the cell membrane. It catalyses the reaction (S)-dihydroorotate + a quinone = orotate + a quinol. It participates in pyrimidine metabolism; UMP biosynthesis via de novo pathway; orotate from (S)-dihydroorotate (quinone route): step 1/1. In terms of biological role, catalyzes the conversion of dihydroorotate to orotate with quinone as electron acceptor. This is Dihydroorotate dehydrogenase (quinone) from Acidovorax ebreus (strain TPSY) (Diaphorobacter sp. (strain TPSY)).